A 1097-amino-acid polypeptide reads, in one-letter code: Platelet-derived growth factor receptor beta (1097 aa).

The N-terminal stretch at M1–G31 is a signal peptide. Ig-like C2-type domains are found at residues L32–V119, P128–Q209, and I213–T308. The Extracellular segment spans residues L32 to V531. N-linked (GlcNAc...) asparagine glycans are attached at residues N44, N88, and N102. A disulfide bond links C53 and C99. C148 and C189 form a disulfide bridge. N-linked (GlcNAc...) asparagine glycosylation is present at N214. A disulfide bridge connects residues C234 and C290. Residues N291, N306, N353, N370, N444, N467, and N478 are each glycosylated (N-linked (GlcNAc...) asparagine). An Ig-like C2-type 4 domain is found at P415–V523. A disulfide bridge connects residues C435 and C507. The helical transmembrane segment at V532 to I552 threads the bilayer. Residues M553–L1097 are Cytoplasmic-facing. Residues Y561, Y578, and Y580 each carry the phosphotyrosine; by autocatalysis modification. The region spanning L599 to L961 is the Protein kinase domain. Residues L605–V613 and K633 each bind ATP. Y685 bears the Phosphotyrosine; by ABL1 and ABL2 mark. Residues Y715, Y739, Y750, Y762, Y770, Y774, and Y777 each carry the phosphotyrosine; by autocatalysis modification. D825 functions as the Proton acceptor in the catalytic mechanism. Y856 carries the phosphotyrosine; by autocatalysis modification. Residues Y933 and Y969 each carry the phosphotyrosine; by ABL1 and ABL2 modification. 2 positions are modified to phosphotyrosine; by autocatalysis: Y1008 and Y1020. A disordered region spans residues T1016 to L1097. Polar residues predominate over residues S1042–C1059. Residues E1072 to Q1081 are compositionally biased toward low complexity.

The protein belongs to the protein kinase superfamily. Tyr protein kinase family. CSF-1/PDGF receptor subfamily. As to quaternary structure, interacts with homodimeric PDGFB and PDGFD, and with heterodimers formed by PDGFA and PDGFB. May also interact with homodimeric PDGFC. Monomer in the absence of bound ligand. Interaction with homodimeric PDGFB, heterodimers formed by PDGFA and PDGFB or homodimeric PDGFD, leads to receptor dimerization, where both PDGFRA homodimers and heterodimers with PDGFRB are observed. Interacts with SH2B2/APS. Interacts directly (tyrosine phosphorylated) with SHB. Interacts (tyrosine phosphorylated) with PIK3R1 and RASA1. Interacts (tyrosine phosphorylated) with CBL. Interacts (tyrosine phosphorylated) with SRC and SRC family kinases. Interacts (tyrosine phosphorylated) with PIK3C2B, maybe indirectly. Interacts (tyrosine phosphorylated) with SHC1, GRB7, GRB10 and NCK1. Interaction with GRB2 is mediated by SHC1. Interacts (via C-terminus) with NHERF1. N-glycosylated. In terms of processing, ubiquitinated. After autophosphorylation, the receptor is polyubiquitinated, leading to its degradation. Post-translationally, autophosphorylated on tyrosine residues upon ligand binding. Autophosphorylation occurs in trans, i.e. one subunit of the dimeric receptor phosphorylates tyrosine residues on the other subunit. Phosphorylation at Tyr-578, and to a lesser degree, Tyr-580 is important for interaction with SRC. Phosphorylation at Tyr-715 is important for interaction with GRB2. Phosphorylation at Tyr-739 and Tyr-750 is important for interaction with PIK3R1. Phosphorylation at Tyr-750 is important for interaction with NCK1. Phosphorylation at Tyr-770 and Tyr-856 is important for interaction with RASA1/GAP. Phosphorylation at Tyr-856 is important for efficient phosphorylation of PLCG1 and PTPN11, resulting in increased phosphorylation of AKT1, MAPK1/ERK2 and/or MAPK3/ERK1, PDCD6IP/ALIX and STAM, and in increased cell proliferation. Phosphorylation at Tyr-1008 is important for interaction with PTPN11. Phosphorylation at Tyr-1008 and Tyr-1020 is important for interaction with PLCG1. Dephosphorylated by PTPRJ at Tyr-750, Tyr-856, Tyr-1008 and Tyr-1020. Dephosphorylated by PTPN2 at Tyr-578 and Tyr-1020.

The protein localises to the cell membrane. The protein resides in the cytoplasmic vesicle. Its subcellular location is the lysosome lumen. The catalysed reaction is L-tyrosyl-[protein] + ATP = O-phospho-L-tyrosyl-[protein] + ADP + H(+). With respect to regulation, present in an inactive conformation in the absence of bound ligand. Binding of PDGFB and/or PDGFD leads to dimerization and activation by autophosphorylation on tyrosine residues. Its function is as follows. Tyrosine-protein kinase that acts as a cell-surface receptor for homodimeric PDGFB and PDGFD and for heterodimers formed by PDGFA and PDGFB, and plays an essential role in the regulation of embryonic development, cell proliferation, survival, differentiation, chemotaxis and migration. Plays an essential role in blood vessel development by promoting proliferation, migration and recruitment of pericytes and smooth muscle cells to endothelial cells. Plays a role in the migration of vascular smooth muscle cells and the formation of neointima at vascular injury sites. Required for normal development of the cardiovascular system. Required for normal recruitment of pericytes (mesangial cells) in the kidney glomerulus, and for normal formation of a branched network of capillaries in kidney glomeruli. Promotes rearrangement of the actin cytoskeleton and the formation of membrane ruffles. Binding of its cognate ligands - homodimeric PDGFB, heterodimers formed by PDGFA and PDGFB or homodimeric PDGFD -leads to the activation of several signaling cascades; the response depends on the nature of the bound ligand and is modulated by the formation of heterodimers between PDGFRA and PDGFRB. Phosphorylates PLCG1, PIK3R1, PTPN11, RASA1/GAP, CBL, SHC1 and NCK1. Activation of PLCG1 leads to the production of the cellular signaling molecules diacylglycerol and inositol 1,4,5-trisphosphate, mobilization of cytosolic Ca(2+) and the activation of protein kinase C. Phosphorylation of PIK3R1, the regulatory subunit of phosphatidylinositol 3-kinase, leads to the activation of the AKT1 signaling pathway. Phosphorylation of SHC1, or of the C-terminus of PTPN11, creates a binding site for GRB2, resulting in the activation of HRAS, RAF1 and down-stream MAP kinases, including MAPK1/ERK2 and/or MAPK3/ERK1. Promotes phosphorylation and activation of SRC family kinases. Promotes phosphorylation of PDCD6IP/ALIX and STAM. Receptor signaling is down-regulated by protein phosphatases that dephosphorylate the receptor and its down-stream effectors, and by rapid internalization of the activated receptor. In Rattus norvegicus (Rat), this protein is Platelet-derived growth factor receptor beta (Pdgfrb).